The primary structure comprises 256 residues: Trypsin, alkaline C (256 aa).

Residues 1–17 (MRLFLALLALGFAAVAA) form the signal peptide. The propeptide at 18–24 (VPANPQR) is activation peptide. The 232-residue stretch at 25–256 (IVGGSTTTIQ…RYTSWISNNS (232 aa)) folds into the Peptidase S1 domain. A disulfide bond links cysteine 55 and cysteine 71. Active-site charge relay system residues include histidine 70 and aspartate 115. 2 cysteine pairs are disulfide-bonded: cysteine 180–cysteine 197 and cysteine 209–cysteine 233. Catalysis depends on serine 213, which acts as the Charge relay system.

The protein belongs to the peptidase S1 family. In terms of tissue distribution, midgut.

The protein resides in the secreted. The protein localises to the extracellular space. It catalyses the reaction Preferential cleavage: Arg-|-Xaa, Lys-|-Xaa.. In Manduca sexta (Tobacco hawkmoth), this protein is Trypsin, alkaline C.